The sequence spans 292 residues: UPF0725 protein At4g28920 (292 aa).

The span at 1–17 shows a compositional bias: acidic residues; sequence MSENDSSESDIEMDPEE. Residues 1-24 are disordered; sequence MSENDSSESDIEMDPEEEKVYRRQ.

The protein belongs to the UPF0725 (EMB2204) family.

In Arabidopsis thaliana (Mouse-ear cress), this protein is UPF0725 protein At4g28920.